We begin with the raw amino-acid sequence, 494 residues long: UPF0371 protein SSA_0208 (494 aa).

It belongs to the UPF0371 family.

This chain is UPF0371 protein SSA_0208, found in Streptococcus sanguinis (strain SK36).